The sequence spans 382 residues: 1-deoxy-D-xylulose 5-phosphate reductoisomerase (382 aa).

Residues threonine 11, glycine 12, serine 13, isoleucine 14, and asparagine 123 each contribute to the NADPH site. Lysine 124 contacts 1-deoxy-D-xylulose 5-phosphate. Glutamate 125 contributes to the NADPH binding site. Aspartate 149 contributes to the Mn(2+) binding site. Positions 150, 151, 173, and 196 each coordinate 1-deoxy-D-xylulose 5-phosphate. Residue glutamate 151 participates in Mn(2+) binding. Glycine 202 is an NADPH binding site. 1-deoxy-D-xylulose 5-phosphate is bound by residues serine 209, asparagine 214, lysine 215, and glutamate 218. Glutamate 218 provides a ligand contact to Mn(2+).

This sequence belongs to the DXR family. Requires Mg(2+) as cofactor. It depends on Mn(2+) as a cofactor.

The catalysed reaction is 2-C-methyl-D-erythritol 4-phosphate + NADP(+) = 1-deoxy-D-xylulose 5-phosphate + NADPH + H(+). It functions in the pathway isoprenoid biosynthesis; isopentenyl diphosphate biosynthesis via DXP pathway; isopentenyl diphosphate from 1-deoxy-D-xylulose 5-phosphate: step 1/6. In terms of biological role, catalyzes the NADPH-dependent rearrangement and reduction of 1-deoxy-D-xylulose-5-phosphate (DXP) to 2-C-methyl-D-erythritol 4-phosphate (MEP). The protein is 1-deoxy-D-xylulose 5-phosphate reductoisomerase of Phocaeicola vulgatus (strain ATCC 8482 / DSM 1447 / JCM 5826 / CCUG 4940 / NBRC 14291 / NCTC 11154) (Bacteroides vulgatus).